The primary structure comprises 929 residues: Formin-like protein 11 (929 aa).

Positions 1–28 (MMRHCRREWLLALCLISVQLLIPTGCEG) are cleaved as a signal peptide. The tract at residues 153–215 (ESSTTKSIPE…KSVAEKKKDS (63 aa)) is disordered. Residues 171 to 189 (KTSTPKPVNKPTDSVSSPP) are compositionally biased toward polar residues. Basic and acidic residues predominate over residues 191–215 (RSYKSAPTEKENPPTKSVAEKKKDS). The helical transmembrane segment at 222-242 (FIGLSIAGIALMAHLCLCCFM) threads the bilayer. 2 disordered regions span residues 372–472 (PVGS…ENSN) and 726–749 (AAKEQNSGVSSVKTDDLGDKSEQT). Residues 382-447 (MQPPVMPPPI…GPPRPPPPAM (66 aa)) show a composition bias toward pro residues. An FH2 domain is found at 468–898 (VENSNEAKTK…KAKAKQPSQS (431 aa)). Residues 738 to 749 (KTDDLGDKSEQT) are compositionally biased toward basic and acidic residues.

Belongs to the formin-like family. Class-I subfamily.

The protein localises to the membrane. This Oryza sativa subsp. japonica (Rice) protein is Formin-like protein 11 (FH11).